A 190-amino-acid chain; its full sequence is dTTP/UTP pyrophosphatase (190 aa).

D71 serves as the catalytic Proton acceptor.

This sequence belongs to the Maf family. YhdE subfamily. The cofactor is a divalent metal cation.

The protein localises to the cytoplasm. The catalysed reaction is dTTP + H2O = dTMP + diphosphate + H(+). It carries out the reaction UTP + H2O = UMP + diphosphate + H(+). Nucleoside triphosphate pyrophosphatase that hydrolyzes dTTP and UTP. May have a dual role in cell division arrest and in preventing the incorporation of modified nucleotides into cellular nucleic acids. The sequence is that of dTTP/UTP pyrophosphatase from Xanthomonas oryzae pv. oryzae (strain MAFF 311018).